The primary structure comprises 881 residues: Tyrosine-protein kinase receptor TYRO3 (881 aa).

Residues 1–28 (MVNPGPPGLIAGLLLAALSLSSVDGTKA) form the signal peptide. 2 Ig-like C2-type domains span residues 29 to 114 (LGFV…KSVS) and 125 to 206 (PYFT…AIVE). At 29–414 (LGFVGHGYNM…QRHPHTRMSW (386 aa)) the chain is on the extracellular side. Residues Asn-37 and Asn-49 are each glycosylated (N-linked (GlcNAc...) asparagine). Residues Cys-50 and Cys-103 are joined by a disulfide bond. A glycan (N-linked (GlcNAc...) asparagine) is linked at Asn-143. Cys-146 and Cys-189 are joined by a disulfide. Fibronectin type-III domains are found at residues 213–306 (PPFN…TKEK) and 311–401 (IPQN…SKEE). 4 N-linked (GlcNAc...) asparagine glycosylation sites follow: Asn-216, Asn-279, Asn-351, and Asn-365. The chain crosses the membrane as a helical span at residues 415–435 (VPMVLGILTALVTVVAMTLIF). At 436 to 881 (LRKGRKETRF…MQEEQVVITL (446 aa)) the chain is on the cytoplasmic side. The region spanning 503-774 (FTLGRTLGKG…VDLKRRLEAI (272 aa)) is the Protein kinase domain. ATP-binding positions include 509-517 (LGKGEFGSV) and Lys-535. Asp-640 acts as the Proton acceptor in catalysis. Position 671 is a phosphotyrosine; by autocatalysis (Tyr-671). The interval 846-881 (EWSSSAQNGEARGLLHEEEEEEEEEEMQEEQVVITL) is disordered. The span at 862 to 874 (EEEEEEEEEEMQE) shows a compositional bias: acidic residues.

Belongs to the protein kinase superfamily. Tyr protein kinase family. AXL/UFO subfamily. In terms of processing, tyrosine phosphorylated upon receptor stimulation.

It is found in the cell membrane. The enzyme catalyses L-tyrosyl-[protein] + ATP = O-phospho-L-tyrosyl-[protein] + ADP + H(+). Its function is as follows. May be involved in cell adhesion processes, particularly in the central nervous system. The chain is Tyrosine-protein kinase receptor TYRO3 (tyro3) from Xenopus tropicalis (Western clawed frog).